A 120-amino-acid chain; its full sequence is Large ribosomal subunit protein uL22 (120 aa).

Belongs to the universal ribosomal protein uL22 family. As to quaternary structure, part of the 50S ribosomal subunit.

This protein binds specifically to 23S rRNA; its binding is stimulated by other ribosomal proteins, e.g. L4, L17, and L20. It is important during the early stages of 50S assembly. It makes multiple contacts with different domains of the 23S rRNA in the assembled 50S subunit and ribosome. Functionally, the globular domain of the protein is located near the polypeptide exit tunnel on the outside of the subunit, while an extended beta-hairpin is found that lines the wall of the exit tunnel in the center of the 70S ribosome. The sequence is that of Large ribosomal subunit protein uL22 from Corynebacterium diphtheriae (strain ATCC 700971 / NCTC 13129 / Biotype gravis).